Consider the following 654-residue polypeptide: Macrolide export ATP-binding/permease protein MacB (654 aa).

One can recognise an ABC transporter domain in the interval Leu6 to Ser244. Gly42 to Ser49 serves as a coordination point for ATP. A run of 4 helical transmembrane segments spans residues Phe280 to Gly300, Leu529 to Ile549, Leu584 to Phe604, and Ser619 to Ala639.

The protein belongs to the ABC transporter superfamily. Macrolide exporter (TC 3.A.1.122) family. Homodimer. Part of the tripartite efflux system MacAB-TolC, which is composed of an inner membrane transporter, MacB, a periplasmic membrane fusion protein, MacA, and an outer membrane component, TolC. The complex forms a large protein conduit and can translocate molecules across both the inner and outer membranes. Interacts with MacA.

The protein localises to the cell inner membrane. In terms of biological role, part of the tripartite efflux system MacAB-TolC. MacB is a non-canonical ABC transporter that contains transmembrane domains (TMD), which form a pore in the inner membrane, and an ATP-binding domain (NBD), which is responsible for energy generation. Confers resistance against macrolides. The sequence is that of Macrolide export ATP-binding/permease protein MacB from Vibrio parahaemolyticus serotype O3:K6 (strain RIMD 2210633).